Reading from the N-terminus, the 293-residue chain is Diaminopimelate epimerase (293 aa).

3 residues coordinate substrate: Asn17, Gln47, and Asn67. Cys76 serves as the catalytic Proton donor. Residues 77 to 78 (GN), Asn164, Asn197, and 215 to 216 (ER) each bind substrate. Cys224 functions as the Proton acceptor in the catalytic mechanism. Residue 225–226 (GS) coordinates substrate.

It belongs to the diaminopimelate epimerase family. As to quaternary structure, homodimer.

It is found in the cytoplasm. It carries out the reaction (2S,6S)-2,6-diaminopimelate = meso-2,6-diaminopimelate. The protein operates within amino-acid biosynthesis; L-lysine biosynthesis via DAP pathway; DL-2,6-diaminopimelate from LL-2,6-diaminopimelate: step 1/1. Catalyzes the stereoinversion of LL-2,6-diaminopimelate (L,L-DAP) to meso-diaminopimelate (meso-DAP), a precursor of L-lysine and an essential component of the bacterial peptidoglycan. The chain is Diaminopimelate epimerase from Rhodopseudomonas palustris (strain TIE-1).